The following is a 234-amino-acid chain: Sugar fermentation stimulation protein homolog (234 aa).

The protein belongs to the SfsA family.

The polypeptide is Sugar fermentation stimulation protein homolog (Enterobacter sp. (strain 638)).